The sequence spans 274 residues: NH(3)-dependent NAD(+) synthetase (274 aa).

46-53 (GISGGQDS) is an ATP binding site. Aspartate 52 lines the Mg(2+) pocket. Residue arginine 140 participates in deamido-NAD(+) binding. Threonine 160 is a binding site for ATP. Position 165 (glutamate 165) interacts with Mg(2+). The deamido-NAD(+) site is built by lysine 173 and aspartate 180. ATP contacts are provided by lysine 189 and threonine 211. 260 to 261 (HK) provides a ligand contact to deamido-NAD(+).

This sequence belongs to the NAD synthetase family. In terms of assembly, homodimer.

The catalysed reaction is deamido-NAD(+) + NH4(+) + ATP = AMP + diphosphate + NAD(+) + H(+). It participates in cofactor biosynthesis; NAD(+) biosynthesis; NAD(+) from deamido-NAD(+) (ammonia route): step 1/1. Its function is as follows. Catalyzes the ATP-dependent amidation of deamido-NAD to form NAD. Uses ammonia as a nitrogen source. The chain is NH(3)-dependent NAD(+) synthetase from Streptococcus pneumoniae serotype 19F (strain G54).